The primary structure comprises 454 residues: Cobyrinate a,c-diamide synthase (454 aa).

The 196-residue stretch at 247–442 (KIGIAMDSAF…IHAHWASNPN (196 aa)) folds into the GATase cobBQ-type domain. The active-site Nucleophile is the Cys329.

This sequence belongs to the CobB/CbiA family. The cofactor is Mg(2+).

It carries out the reaction cob(II)yrinate + 2 L-glutamine + 2 ATP + 2 H2O = cob(II)yrinate a,c diamide + 2 L-glutamate + 2 ADP + 2 phosphate + 2 H(+). It functions in the pathway cofactor biosynthesis; adenosylcobalamin biosynthesis; cob(II)yrinate a,c-diamide from sirohydrochlorin (anaerobic route): step 10/10. Catalyzes the ATP-dependent amidation of the two carboxylate groups at positions a and c of cobyrinate, using either L-glutamine or ammonia as the nitrogen source. The chain is Cobyrinate a,c-diamide synthase from Leptospira interrogans serogroup Icterohaemorrhagiae serovar copenhageni (strain Fiocruz L1-130).